Consider the following 543-residue polypeptide: Ipecac alkaloid beta-glucosidase 3 (543 aa).

A beta-D-glucoside-binding positions include glutamine 36, histidine 140, 185–186, tyrosine 350, glutamate 422, tryptophan 471, and phenylalanine 487; that span reads NE. Residue glutamate 186 is the Proton donor of the active site. Glutamate 422 (nucleophile) is an active-site residue.

This sequence belongs to the glycosyl hydrolase 1 family.

The protein resides in the cytoplasm. It localises to the cytosol. The enzyme catalyses deacetylipecoside + H2O = deacetylipecoside aglycone + D-glucose. It catalyses the reaction deacetylisoipecoside + H2O = deacetylisoipecoside aglycone + D-glucose. The protein operates within alkaloid biosynthesis. In terms of biological role, beta-glucosidase catalyzing deglucosylation on N-deacetylisoipecoside and N-deacetylipecoside. In Carapichea ipecacuanha (Ipecac), this protein is Ipecac alkaloid beta-glucosidase 3.